Here is a 183-residue protein sequence, read N- to C-terminus: Lipocalin (183 aa).

The first 20 residues, 1 to 20, serve as a signal peptide directing secretion; it reads MKGLVLSFALVALSALCVYG. A disulfide bridge links C83 with C179.

This sequence belongs to the calycin superfamily. Lipocalin family. Monomer. As to expression, expressed mainly in choroid plexus. Much lower expression in other brain areas, and absent from liver.

The protein localises to the secreted. Might have a transport function across the blood brain barrier. Is supposed to have similar functions as a transthyretin which must have evolved after the stage of the amphibians in evolution. The protein is Lipocalin of Rhinella marina (Cane toad).